Reading from the N-terminus, the 654-residue chain is MIEEGGNKRKTMAEKRQLFIEMRAQNFDVIRLSTYRTACKLRFVQKRCNLHLVDIWNMIEAFRDNGLNTLDHATEISVSRLETVISSIYYQLNKRLPSTHQINVEQSISLLLNFMIAAYDSEGRGKLTVFSVKAMLATMCGGKMLDKLRYIFSQMSDSNGLMMFGKLDQFLKEALKLPTAVFEGPSFGYTEHAVRTCFPQQKKIMLNMFLDTMMADPPPQCLVWLPLMHRLAHVENVFHPVECSYCHCESMMGFRYRCQQCHNYQLCQNCFWRGHAGGPHSNQHQMKELSSWKSPAKKLSHAISKSLGCVPSREPPHPVFPEQPEKPLDLAHIVPPRPLTNMNDTMVSHMSSGVPTPTKRLQYGQDMPNLLADEHALIASYVARLQHCTRVLDSPSRLDEEHRLIARYAARLAAEAGNMTRPPTDASFNFDANKQQRQLIAELENKNREILQEIQRLRLEHEQASQPTPEKAQQNPTLLAELRLLRQRKDELEQRMSALQESRRELMVQLEGLMKLLKAQATGSPHTSPTHGGGRSMPMPVRSTSAGSTPTHGPQDSLSGVGGDVQEAFAQGTRRNLRNDLLVAADSITNTMSSLVKELHSGETQRFPLVSSSPSCPLPCPTIPTHSPSFHATFPSRNTRDLHPVPPSHMVSLY.

M1 bears the N-acetylmethionine mark. Phosphothreonine occurs at positions 11, 69, 179, and 212. Residues F238–S294 form a ZZ-type zinc finger. Zn(2+) is bound by residues C243, C246, C258, C261, C267, C270, H280, and H284. S394 carries the post-translational modification Phosphoserine. A syntrophin-binding region region spans residues D399–R448. T424 bears the Phosphothreonine mark. The stretch at N429–A519 forms a coiled coil. The interval Q520–G562 is disordered. Polar residues-rich tracts occupy residues A521–T530 and R542–L558.

Belongs to the dystrophin family. Dystrobrevin subfamily. In terms of assembly, interacts with dystrophin short form DP71 and syntrophins SNTG1 and SNTG2. Binds DTNBP1. Forms a specific complex composed of DMD, SNTB2 and SNTA1 in neuron; the interaction with SNTB2 and SNTA1 is DMD independent. Interacts with UTRN and dystrophin short form DP71 in the kidney and liver. Interacts with SNTB1, SNTB2 and SNTA1 in kidney and liver. Interacts with KIF5A. Interacts with HMG20A and HMG20B. Interacts with OLFM1. Interacts with PRKAR2B and PRKAR1A. Post-translationally, phosphorylated by PKA. Phosphorylation at Thr-11 alters the interaction with KIF5A. As to expression, expressed in neurons. In the isocortex, expressed most prominently in the somata (including the nuclei) and the dendrites of the pyramidal cells. Expressed in the hippocampus CA1, CA2, and CA3 neurons, namely in the initial segments of dendrites. Expressed in the Purkinje cells, molecular layer interneurons, and granule cells of cerebellum. Expressed in axon fascicles associated with the spinal trigeminal tract and in the internal capsule in the brainstem.

It is found in the cytoplasm. Its subcellular location is the postsynaptic density. It localises to the cell projection. The protein localises to the dendrite. The protein resides in the basal cell membrane. It is found in the postsynapse. Its subcellular location is the nucleus. Functionally, scaffolding protein that assembles DMD and SNTA1 molecules to the basal membrane of kidney cells and liver sinusoids. May function as a repressor of the SYN1 promoter through the binding of repressor element-1 (RE-1), in turn regulates SYN1 expression and may be involved in cell proliferation regulation during the early phase of neural differentiation. May be required for proper maturation and function of a subset of inhibitory synapses. This is Dystrobrevin beta from Rattus norvegicus (Rat).